A 304-amino-acid chain; its full sequence is Methionyl-tRNA formyltransferase (304 aa).

A (6S)-5,6,7,8-tetrahydrofolate-binding site is contributed by 109-112 (SDLP).

It belongs to the Fmt family.

It carries out the reaction L-methionyl-tRNA(fMet) + (6R)-10-formyltetrahydrofolate = N-formyl-L-methionyl-tRNA(fMet) + (6S)-5,6,7,8-tetrahydrofolate + H(+). Attaches a formyl group to the free amino group of methionyl-tRNA(fMet). The formyl group appears to play a dual role in the initiator identity of N-formylmethionyl-tRNA by promoting its recognition by IF2 and preventing the misappropriation of this tRNA by the elongation apparatus. This is Methionyl-tRNA formyltransferase from Rickettsia bellii (strain RML369-C).